The primary structure comprises 76 residues: Omega-conotoxin-like TxO5 (76 aa).

An N-terminal signal peptide occupies residues 1–22; that stretch reads MKLTCMVIVAVLFLTAWTFVTA. Residues 23–50 constitute a propeptide that is removed on maturation; the sequence is ITSNGLENLFPNAHHEMKNPEASKLNKR. Disulfide bonds link cysteine 51-cysteine 66, cysteine 58-cysteine 70, and cysteine 65-cysteine 75.

This sequence belongs to the conotoxin O1 superfamily. In terms of tissue distribution, expressed by the venom duct.

The protein resides in the secreted. Omega-conotoxins act at presynaptic membranes, they bind and block voltage-gated calcium channels (Cav). This is Omega-conotoxin-like TxO5 (TXO5) from Conus textile (Cloth-of-gold cone).